A 103-amino-acid chain; its full sequence is MKKIRIKLKSFDSGILHRSTKEIVMAAKRNGALVSGPIPLPTRVSRYTVNKSPHVDKKSREQFQLAVHKCLLELSSFNAHLLSTFTNFQLPAGVDISVEVRDE.

This sequence belongs to the universal ribosomal protein uS10 family. In terms of assembly, part of the 30S ribosomal subunit.

Functionally, involved in the binding of tRNA to the ribosomes. This is Small ribosomal subunit protein uS10 from Neorickettsia sennetsu (strain ATCC VR-367 / Miyayama) (Ehrlichia sennetsu).